A 273-amino-acid polypeptide reads, in one-letter code: 2,3,4,5-tetrahydropyridine-2,6-dicarboxylate N-succinyltransferase (273 aa).

The substrate site is built by Arg-104 and Asp-141.

It belongs to the transferase hexapeptide repeat family. In terms of assembly, homotrimer.

The protein resides in the cytoplasm. It catalyses the reaction (S)-2,3,4,5-tetrahydrodipicolinate + succinyl-CoA + H2O = (S)-2-succinylamino-6-oxoheptanedioate + CoA. Its pathway is amino-acid biosynthesis; L-lysine biosynthesis via DAP pathway; LL-2,6-diaminopimelate from (S)-tetrahydrodipicolinate (succinylase route): step 1/3. This is 2,3,4,5-tetrahydropyridine-2,6-dicarboxylate N-succinyltransferase from Buchnera aphidicola subsp. Schizaphis graminum (strain Sg).